The sequence spans 229 residues: All-trans retinoic acid-induced differentiation factor (229 aa).

The N-terminal stretch at 1-30 (MAPHDPGSLTTLVPWAAALLLALGVERALA) is a signal peptide. The Extracellular portion of the chain corresponds to 31–199 (LPEICTQCPG…YKCMRQGSFS (169 aa)). N-linked (GlcNAc...) asparagine glycans are attached at residues Asn-44, Asn-79, Asn-157, and Asn-168. The EGF-like domain occupies 152 to 193 (QKNLCNNTGDPEMCPENGSCVPDGPGLLQCVCADGFHGYKCM). Cystine bridges form between Cys-156/Cys-171, Cys-165/Cys-181, and Cys-183/Cys-192. The chain crosses the membrane as a helical span at residues 200-220 (LLMFFGILGATTLSVSILLWA). Over 221–229 (TQRRKAKTS) the chain is Cytoplasmic.

Interacts with NELL1; the interaction promotes osteoblastic differentiation and mineralization. Interacts with SLC37A3; the interaction is direct and both proteins are mutually dependent for their stability. In terms of tissue distribution, weakly expressed in hematopoietic cell lines.

Its subcellular location is the nucleus envelope. It is found in the cell membrane. The protein localises to the lysosome membrane. Promotes osteoblast cell differentiation and terminal mineralization. Plays a role in inducing the cell cycle arrest via inhibiting CCND1 expression in all-trans-retinoic acid (ATRA) signal pathway. In osteoclasts, forms a transporter complex with ATRAID for nitrogen-containing-bisphophonates (N-BPs) required for releasing N-BP molecules that have trafficked to lysosomes through fluid-phase endocytosis into the cytosol. This Homo sapiens (Human) protein is All-trans retinoic acid-induced differentiation factor.